A 682-amino-acid chain; its full sequence is Two-component system protein A (682 aa).

Residues 11-41 (SLDDNDNGQQHQDEVQAKHQDQGHTCPSRPS) are disordered. Over residues 21–32 (HQDEVQAKHQDQ) the composition is skewed to basic and acidic residues. 2 consecutive PAS domains span residues 45–105 (LSRI…PILY) and 166–239 (MNET…LREG). Residues 241 to 292 (IEDEGWRYRRDGSRFWANVLITPIYQFGQHVGFVKVTRDLTERKEAEACMIA) enclose the PAC domain. The Histidine kinase domain maps to 307 to 530 (NISHEIRTPM…VFWFTAKMGG (224 aa)). Histidine 310 bears the Phosphohistidine; by autocatalysis mark. The Response regulatory domain occupies 563-680 (HVLLVEDNIV…QLLRVLWKWF (118 aa)). Position 615 is a 4-aspartylphosphate (aspartate 615).

Post-translationally, activation probably requires a transfer of a phosphate group between a His in the histidine kinase domain and an Asp of the response regulatory domain.

It is found in the cytoplasm. The catalysed reaction is ATP + protein L-histidine = ADP + protein N-phospho-L-histidine.. Its function is as follows. May be part of a two-component regulatory system required for formation of conidia on certain growth media. The sequence is that of Two-component system protein A from Emericella nidulans (strain FGSC A4 / ATCC 38163 / CBS 112.46 / NRRL 194 / M139) (Aspergillus nidulans).